A 398-amino-acid polypeptide reads, in one-letter code: MMSMLGGLQRYFRVILLLLLALTLLLLAGFLHSDLELDTPLFGGQAEGPPVTNIMFLKTHKTASSTVLNILYRFAETHNLSVALPAGSRVHLGYPWLFLARYVEGVGSQQRFNIMCNHLRFNLPQVQKVMPNDTFYFSILRNPVFQLESSFIYYKTYAPAFRGAPSLDAFLASPRTFYNDSRHLRNVYAKNNMWFDFGFDPNAQCEEGYVRARIAEVERRFRLVLIAEHLDESLVLLRRRLRWALDDVVAFRLNSRSARSVARLSPETRERARSWCALDWRLYEHFNRTLWAQLRAELGPRRLRGEVERLRARRRELASLCLQDGGALKNHTQIRDPRLRPYQSGKADILGYNLRPGLDNQTLGVCQRLVMPELQYMARLYALQFPEKPLKNIPFLGA.

At 1–10 (MMSMLGGLQR) the chain is on the cytoplasmic side. The chain crosses the membrane as a helical; Signal-anchor for type II membrane protein span at residues 11–31 (YFRVILLLLLALTLLLLAGFL). Over 32-398 (HSDLELDTPL…PLKNIPFLGA (367 aa)) the chain is Lumenal. 6 N-linked (GlcNAc...) asparagine glycosylation sites follow: Asn-79, Asn-132, Asn-179, Asn-287, Asn-330, and Asn-360.

The protein belongs to the galactose-3-O-sulfotransferase family. As to expression, ubiquitous. Detected in heart, stomach, colon, liver and spleen, in epithelial cells lining the lower to middle layer of the crypts in colonic mucosa, hepatocytes surrounding the central vein of the liver, extravillous cytotrophoblasts in the basal plate of the septum of the placenta, renal tubules of the kidney, and neuronal cells of the cerebral cortex.

Its subcellular location is the golgi apparatus. The protein localises to the golgi stack membrane. Its pathway is protein modification; carbohydrate sulfation. Strongly inhibited by Cu(2+) and Zn(2+). Its function is as follows. Transfers a sulfate group to the hydroxyl group at C3 of non-reducing beta-galactosyl residues. Acts both on type 1 (Gal-beta-1,3-GlcNAc) and type 2 (Gal-beta-1,4-GlcNAc) chains with similar efficiency. The protein is Galactose-3-O-sulfotransferase 2 (GAL3ST2) of Homo sapiens (Human).